Reading from the N-terminus, the 479-residue chain is Ribosomal RNA small subunit methyltransferase F (479 aa).

Residues 125-131 (AAAPGSK), glutamate 149, aspartate 176, and aspartate 194 contribute to the S-adenosyl-L-methionine site. Residue cysteine 247 is the Nucleophile of the active site.

Belongs to the class I-like SAM-binding methyltransferase superfamily. RsmB/NOP family.

Its subcellular location is the cytoplasm. The catalysed reaction is cytidine(1407) in 16S rRNA + S-adenosyl-L-methionine = 5-methylcytidine(1407) in 16S rRNA + S-adenosyl-L-homocysteine + H(+). Functionally, specifically methylates the cytosine at position 1407 (m5C1407) of 16S rRNA. The polypeptide is Ribosomal RNA small subunit methyltransferase F (Salmonella paratyphi A (strain ATCC 9150 / SARB42)).